A 330-amino-acid chain; its full sequence is G-protein coupled receptor 74 (330 aa).

Helical transmembrane passes span 50-70 (LIVV…NLWL), 85-105 (FILI…IFSI), 121-141 (MVVF…LCFD), 160-180 (WVFC…QKAL), 210-230 (VAVS…CIFY), 252-272 (MLLF…LSFI), and 295-315 (LPLL…IYIL). An intrachain disulfide couples cysteine 117 to cysteine 195.

Belongs to the G-protein coupled receptor 1 family.

The protein localises to the host membrane. The polypeptide is G-protein coupled receptor 74 (74) (Equus caballus (Horse)).